The sequence spans 376 residues: MHTILLVVFMIILGAIIGGVTNMIAIKMLFHPFKPYYIFRFRIPFTPGLIPKRREEIARKIGQVIEEHLITEELIRQKLNQPQSRNMIQQLIHKQISKLKNDDVTIKKIAGFLGIDVNELVDYKLTTKFLNKLNFWYESNKYRKLSEILPQSFLDQCKGQIEYITDFLCERARNYLSSEKGERDIYELLDTFFNEKGRIIGLLQMFMTKESIADRIQHELIRLTQHPQSQKIITKVLNDEYETFKDKNLDEIIKEQQFKNYSQLVLNELKTYLNLKDKTERPIKQVVPQFIQFLEDDTSKRMTDFIIKGTSKHLTNIMKKINLRQLVEEQINTFDLKYIENLIIDIANKELKLIMTLGFILGGIIGFFQGVIAIFV.

The next 2 membrane-spanning stretches (helical) occupy residues 4 to 24 and 356 to 376; these read ILLV…TNMI and TLGF…AIFV.

It belongs to the UPF0754 family.

It is found in the cell membrane. This is UPF0754 membrane protein SERP1382 from Staphylococcus epidermidis (strain ATCC 35984 / DSM 28319 / BCRC 17069 / CCUG 31568 / BM 3577 / RP62A).